Consider the following 73-residue polypeptide: Disintegrin lutosin (73 aa).

A Disintegrin domain is found at 1–73; it reads EAGEECDCGS…ADCPRNGLYG (73 aa). 6 disulfide bridges follow: Cys6–Cys21, Cys8–Cys16, Cys15–Cys38, Cys29–Cys35, Cys34–Cys59, and Cys47–Cys66. The Cell attachment site motif lies at 51-53; it reads RGD.

Belongs to the venom metalloproteinase (M12B) family. P-II subfamily. P-IIa sub-subfamily. As to quaternary structure, monomer (disintegrin). In terms of tissue distribution, expressed by the venom gland.

Its subcellular location is the secreted. Functionally, inhibits fibrinogen interaction with platelets. Acts by binding to alpha-IIb/beta-3 (ITGA2B/ITGB3) on the platelet surface and inhibits aggregation induced by ADP, thrombin, platelet-activating factor and collagen. The polypeptide is Disintegrin lutosin (Crotalus lutosus (Great basin rattlesnake)).